The following is a 924-amino-acid chain: Inositol polyphosphate 4-phosphatase type II (924 aa).

A compositionally biased stretch (basic and acidic residues) spans 1 to 13; sequence MEIKEEGASEEGQ. Disordered regions lie at residues 1–24, 481–516, and 546–570; these read MEIK…ANDP, ILKK…HSDY, and DGGS…AIPS. In terms of domain architecture, C2 spans 23–165; the sequence is DPGDCQFTSI…LKSKEQLLVL (143 aa).

It belongs to the inositol 3,4-bisphosphate 4-phosphatase family. As to expression, widely expressed with highest levels occurring in the skeletal muscle and heart.

The enzyme catalyses a 1,2-diacyl-sn-glycero-3-phospho-(1D-myo-inositol-3,4-bisphosphate) + H2O = a 1,2-diacyl-sn-glycero-3-phospho-(1D-myo-inositol-3-phosphate) + phosphate. It catalyses the reaction 1D-myo-inositol 1,3,4-trisphosphate + H2O = 1D-myo-inositol 1,3-bisphosphate + phosphate. It carries out the reaction 1D-myo-inositol 3,4-bisphosphate + H2O = 1D-myo-inositol 3-phosphate + phosphate. The protein operates within signal transduction; phosphatidylinositol signaling pathway. Its activity is regulated as follows. Strongly inhibited by inositol hexakisphosphate. Catalyzes the hydrolysis of the 4-position phosphate of phosphatidylinositol 3,4-bisphosphate, inositol 1,3,4-trisphosphate and inositol 3,4-trisphosphate. Plays a role in the late stages of macropinocytosis by dephosphorylating phosphatidylinositol 3,4-bisphosphate in membrane ruffles. The lipid phosphatase activity is critical for tumor suppressor function. Antagonizes the PI3K-AKT/PKB signaling pathway by dephosphorylating phosphoinositides and thereby modulating cell cycle progression and cell survival. In Homo sapiens (Human), this protein is Inositol polyphosphate 4-phosphatase type II (INPP4B).